Here is a 352-residue protein sequence, read N- to C-terminus: Uroporphyrinogen decarboxylase (352 aa).

Substrate contacts are provided by residues R27–R31, D77, Y154, T209, and H325.

It belongs to the uroporphyrinogen decarboxylase family. As to quaternary structure, homodimer.

The protein resides in the cytoplasm. It catalyses the reaction uroporphyrinogen III + 4 H(+) = coproporphyrinogen III + 4 CO2. It functions in the pathway porphyrin-containing compound metabolism; protoporphyrin-IX biosynthesis; coproporphyrinogen-III from 5-aminolevulinate: step 4/4. Its function is as follows. Catalyzes the decarboxylation of four acetate groups of uroporphyrinogen-III to yield coproporphyrinogen-III. The chain is Uroporphyrinogen decarboxylase from Legionella pneumophila subsp. pneumophila (strain Philadelphia 1 / ATCC 33152 / DSM 7513).